The sequence spans 391 residues: PPE family protein PPE18 (391 aa).

This sequence belongs to the mycobacterial PPE family. In terms of assembly, interacts with human TLR2.

The protein localises to the secreted. It is found in the cell wall. The protein resides in the cell surface. In terms of biological role, could be a crucial virulence factor for intracellular survival of M.tuberculosis. Favors development of Th2-type response, and down-regulates the pro-inflammatory and Th1-type response. Specifically interacts with the human Toll-like receptor 2 (TLR2), leading to an early and sustained activation of p38 MAPK, which induces IL-10 production and activates Th2-type immune response. Also inhibits pro-inflammatory cytokines IL-12p40 and TNF-alpha production. Acts by up-regulating the expression as well as tyrosine phosphorylation of suppressor of cytokine signaling 3 (SOCS-3), leading to the inhibition of phosphorylation of I-kappa-B-alpha, thereby preventing nuclear translocation of the NF-kappa-B/REL subunits and expression of NF-kappa-B regulated genes like IL-12 and TNF-alpha. Induction of SOCS-3 probably depends on the activation of p38 MAPK. In Mycobacterium tuberculosis (strain ATCC 25618 / H37Rv), this protein is PPE family protein PPE18.